A 909-amino-acid polypeptide reads, in one-letter code: Villin-1 (909 aa).

6 Gelsolin-like repeats span residues 29–79, 149–189, 262–305, 391–448, 529–569, and 631–672; these read KQLI…VDSI, VRVK…QEKA, GNLH…TERK, LKVW…QDRA, MQAI…SDHE, and LKVK…KSKE. 2 disordered regions span residues 733-781 and 816-835; these read SLKG…CSSE and DGVA…QKPR. Residues 752 to 762 are compositionally biased toward basic and acidic residues; the sequence is QSKDNASRDLQ. Serine 780 is modified (phosphoserine). The region spanning 844–909 is the HP domain; that stretch reads SLESLAYSYE…NKLKISLHLF (66 aa).

Belongs to the villin/gelsolin family. In terms of tissue distribution, expressed in all tissues examined. Mainly detected in the vascular tissue and the pericycle of roots and in the vasculature of leaves. Not expressed in the root cap.

It localises to the cytoplasm. The protein resides in the cytoskeleton. Functionally, binds actin and actin filament bundles in a Ca(2+)/calmodulin-insensitive manner, but is unable to sever, cap, and nucleate actin filament formation in vitro. Does not protect individual filaments from severing by VLN3 (AC O81645). The polypeptide is Villin-1 (Arabidopsis thaliana (Mouse-ear cress)).